The sequence spans 670 residues: Lebercilin-like protein (670 aa).

The interval 24-44 (RRSAECKRSPGTGDFSRNSNA) is disordered. Coiled coils occupy residues 148–259 (LHKI…EREE) and 305–336 (AAQT…IKNI). A disordered region spans residues 351 to 402 (YPKVSSTKSVQADRKSLPFTSMRHQGTQKSDVAPLTTKGKKATGNMDRKEKS). Residues 368-380 (PFTSMRHQGTQKS) are compositionally biased toward polar residues. The stretch at 420 to 440 (EDSKTKYEDLSREEKHLEVQV) forms a coiled coil. 3 disordered regions span residues 495 to 520 (RSMQ…PLRQ), 533 to 594 (LHHG…FRDK), and 606 to 647 (GYVL…AFGD). Over residues 546–558 (AGNTKYSHSTSKH) the composition is skewed to polar residues. Basic and acidic residues-rich tracts occupy residues 560–572 (SNRE…HSDS), 585–594 (KAKDTTFRDK), and 621–632 (GSEEPLQSKESH). A compositionally biased stretch (polar residues) spans 637–647 (SQASASNAFGD).

The protein belongs to the LCA5 family.

The polypeptide is Lebercilin-like protein (Papio anubis (Olive baboon)).